We begin with the raw amino-acid sequence, 117 residues long: Mediator of RNA polymerase II transcription subunit 11 (117 aa).

Position 2 is an N-acetylalanine (Ala-2).

It belongs to the Mediator complex subunit 11 family. As to quaternary structure, component of the Mediator complex, which is composed of MED1, MED4, MED6, MED7, MED8, MED9, MED10, MED11, MED12, MED13, MED13L, MED14, MED15, MED16, MED17, MED18, MED19, MED20, MED21, MED22, MED23, MED24, MED25, MED26, MED27, MED29, MED30, MED31, CCNC, CDK8 and CDC2L6/CDK11. The MED12, MED13, CCNC and CDK8 subunits form a distinct module termed the CDK8 module. Mediator containing the CDK8 module is less active than Mediator lacking this module in supporting transcriptional activation. Individual preparations of the Mediator complex lacking one or more distinct subunits have been variously termed ARC, CRSP, DRIP, PC2, SMCC and TRAP.

It localises to the nucleus. Its function is as follows. Component of the Mediator complex, a coactivator involved in the regulated transcription of nearly all RNA polymerase II-dependent genes. Mediator functions as a bridge to convey information from gene-specific regulatory proteins to the basal RNA polymerase II transcription machinery. Mediator is recruited to promoters by direct interactions with regulatory proteins and serves as a scaffold for the assembly of a functional pre-initiation complex with RNA polymerase II and the general transcription factors. This is Mediator of RNA polymerase II transcription subunit 11 (MED11) from Bos taurus (Bovine).